Consider the following 317-residue polypeptide: MENMDLIKRNVQEIVTEEELTKLLETKKHPSAYTGYEPSGKIHMGHVLTVNKLLDLQKAGFEITVLLADVHAYLNQKGTMDEVRKTADYNKKCFLALGLDPEMTNFVYGSDFQLSPEYMLNVLKLTQATSLNRAKRSMDEVGRKMEDPKVSQMVYPIMQAVDIALLGVDVAVGGIDQRKIHMLAREGLPGLGFKAPLCIHTPILLGLDGTKMSSSNENYISVDDDEAALKKKFKKAFCPAEDIENNPVLELFKYHITPRYDEMVFERPEKFGGDLVCKSYAELEKVFADGSLHPMDLKNGAAKYLNEILEPVRSVLE.

An L-tyrosine-binding site is contributed by Y33. The short motif at 38 to 46 is the 'HIGH' region element; that stretch reads PSGKIHMGH. The L-tyrosine site is built by Y155, Q159, D162, and Q177. Residues 211 to 215 carry the 'KMSKS' region motif; sequence KMSSS. Residue S214 coordinates ATP.

The protein belongs to the class-I aminoacyl-tRNA synthetase family. TyrS type 3 subfamily. In terms of assembly, homodimer.

The protein resides in the cytoplasm. It catalyses the reaction tRNA(Tyr) + L-tyrosine + ATP = L-tyrosyl-tRNA(Tyr) + AMP + diphosphate + H(+). Catalyzes the attachment of tyrosine to tRNA(Tyr) in a two-step reaction: tyrosine is first activated by ATP to form Tyr-AMP and then transferred to the acceptor end of tRNA(Tyr). In Methanococcoides burtonii (strain DSM 6242 / NBRC 107633 / OCM 468 / ACE-M), this protein is Tyrosine--tRNA ligase.